An 844-amino-acid chain; its full sequence is Fe(2+) transport protein A/Fe(2+) transporter FeoB fusion protein (844 aa).

The feoA stretch occupies residues 1–73; the sequence is MRLSELHTGD…EDAAKIEVEL (73 aa). Positions 74–844 are feoB; it reads ISSNATSSPA…LIYRIGILFF (771 aa). Polar residues predominate over residues 79-106; it reads TSSPASNDIGEQSANPDSNESIPTNPTE. Residues 79–110 form a disordered region; sequence TSSPASNDIGEQSANPDSNESIPTNPTEDISA. Residues 126-289 form the FeoB-type G domain; the sequence is VIRVALIGNP…FDTLISIHEG (164 aa). GTP is bound by residues 133–140, 158–162, 179–182, 240–243, and 269–271; these read GNPNCGKT, GVTVE, DLPG, NMFD, and VGR. Transmembrane regions (helical) follow at residues 418–438, 475–495, 520–540, 559–579, 581–601, 646–666, 786–806, and 817–837; these read VLGF…TFVL, IGGV…YFFI, LHGK…PAIM, PLMS…AFFP, SAGL…VLLA, MGSI…YPRY, IIAL…ATVV, and WAVF…FLIY.

The protein in the N-terminal section; belongs to the FeoA family. It in the C-terminal section; belongs to the TRAFAC class TrmE-Era-EngA-EngB-Septin-like GTPase superfamily. FeoB GTPase (TC 9.A.8) family.

It is found in the cell inner membrane. In terms of biological role, probable transporter of a GTP-driven Fe(2+) uptake system. This chain is Fe(2+) transport protein A/Fe(2+) transporter FeoB fusion protein, found in Porphyromonas gingivalis (strain ATCC BAA-308 / W83).